We begin with the raw amino-acid sequence, 209 residues long: Large ribosomal subunit protein uL3 (209 aa).

The disordered stretch occupies residues 121–154 (GGIKRHNFHRGPMAHGSKYHRRPGSSAAKGPART).

The protein belongs to the universal ribosomal protein uL3 family. In terms of assembly, part of the 50S ribosomal subunit. Forms a cluster with proteins L14 and L19.

One of the primary rRNA binding proteins, it binds directly near the 3'-end of the 23S rRNA, where it nucleates assembly of the 50S subunit. The chain is Large ribosomal subunit protein uL3 from Desulforamulus reducens (strain ATCC BAA-1160 / DSM 100696 / MI-1) (Desulfotomaculum reducens).